Reading from the N-terminus, the 337-residue chain is UPF0284 protein AF_0276 (337 aa).

Belongs to the UPF0284 family.

This Archaeoglobus fulgidus (strain ATCC 49558 / DSM 4304 / JCM 9628 / NBRC 100126 / VC-16) protein is UPF0284 protein AF_0276.